The primary structure comprises 361 residues: Chorismate synthase (361 aa).

NADP(+) contacts are provided by Arg-48 and Arg-54. FMN contacts are provided by residues Arg-125–Ser-127, Asn-238–Ala-239, Gly-278, Lys-293–Ser-297, and Arg-319.

Belongs to the chorismate synthase family. As to quaternary structure, homotetramer. It depends on FMNH2 as a cofactor.

It catalyses the reaction 5-O-(1-carboxyvinyl)-3-phosphoshikimate = chorismate + phosphate. The protein operates within metabolic intermediate biosynthesis; chorismate biosynthesis; chorismate from D-erythrose 4-phosphate and phosphoenolpyruvate: step 7/7. Functionally, catalyzes the anti-1,4-elimination of the C-3 phosphate and the C-6 proR hydrogen from 5-enolpyruvylshikimate-3-phosphate (EPSP) to yield chorismate, which is the branch point compound that serves as the starting substrate for the three terminal pathways of aromatic amino acid biosynthesis. This reaction introduces a second double bond into the aromatic ring system. This chain is Chorismate synthase, found in Enterobacter sp. (strain 638).